Here is a 553-residue protein sequence, read N- to C-terminus: Dihydroxy-acid dehydratase (553 aa).

Position 78 (Asp78) interacts with Mg(2+). Cys119 lines the [2Fe-2S] cluster pocket. Residues Asp120 and Lys121 each coordinate Mg(2+). At Lys121 the chain carries N6-carboxylysine. Cys193 lines the [2Fe-2S] cluster pocket. Glu441 is a binding site for Mg(2+). Ser467 functions as the Proton acceptor in the catalytic mechanism.

This sequence belongs to the IlvD/Edd family. Homodimer. [2Fe-2S] cluster is required as a cofactor. It depends on Mg(2+) as a cofactor.

The catalysed reaction is (2R)-2,3-dihydroxy-3-methylbutanoate = 3-methyl-2-oxobutanoate + H2O. It carries out the reaction (2R,3R)-2,3-dihydroxy-3-methylpentanoate = (S)-3-methyl-2-oxopentanoate + H2O. Its pathway is amino-acid biosynthesis; L-isoleucine biosynthesis; L-isoleucine from 2-oxobutanoate: step 3/4. It participates in amino-acid biosynthesis; L-valine biosynthesis; L-valine from pyruvate: step 3/4. Functionally, functions in the biosynthesis of branched-chain amino acids. Catalyzes the dehydration of (2R,3R)-2,3-dihydroxy-3-methylpentanoate (2,3-dihydroxy-3-methylvalerate) into 2-oxo-3-methylpentanoate (2-oxo-3-methylvalerate) and of (2R)-2,3-dihydroxy-3-methylbutanoate (2,3-dihydroxyisovalerate) into 2-oxo-3-methylbutanoate (2-oxoisovalerate), the penultimate precursor to L-isoleucine and L-valine, respectively. This chain is Dihydroxy-acid dehydratase, found in Geobacter metallireducens (strain ATCC 53774 / DSM 7210 / GS-15).